Reading from the N-terminus, the 227-residue chain is Uracil-DNA glycosylase (227 aa).

The active-site Proton acceptor is the Asp-64.

Belongs to the uracil-DNA glycosylase (UDG) superfamily. UNG family.

It is found in the cytoplasm. It carries out the reaction Hydrolyzes single-stranded DNA or mismatched double-stranded DNA and polynucleotides, releasing free uracil.. Functionally, excises uracil residues from the DNA which can arise as a result of misincorporation of dUMP residues by DNA polymerase or due to deamination of cytosine. The protein is Uracil-DNA glycosylase of Alkaliphilus metalliredigens (strain QYMF).